The following is a 448-amino-acid chain: Trigger factor (448 aa).

In terms of domain architecture, PPIase FKBP-type spans 160–245 (GDMLLMKVES…IQEIREEKLP (86 aa)).

Belongs to the FKBP-type PPIase family. Tig subfamily.

The protein resides in the cytoplasm. The enzyme catalyses [protein]-peptidylproline (omega=180) = [protein]-peptidylproline (omega=0). In terms of biological role, involved in protein export. Acts as a chaperone by maintaining the newly synthesized protein in an open conformation. Functions as a peptidyl-prolyl cis-trans isomerase. This chain is Trigger factor, found in Dehalococcoides mccartyi (strain ATCC BAA-2266 / KCTC 15142 / 195) (Dehalococcoides ethenogenes (strain 195)).